The following is a 172-amino-acid chain: Putative phosphoesterase Bcer98_0945 (172 aa).

Catalysis depends on histidine 34, which acts as the Proton donor. Short sequence motifs (HXTX) lie at residues 34–37 (HITL) and 115–118 (HLTI). Residue histidine 115 is the Proton acceptor of the active site.

Belongs to the 2H phosphoesterase superfamily. YjcG family.

This Bacillus cytotoxicus (strain DSM 22905 / CIP 110041 / 391-98 / NVH 391-98) protein is Putative phosphoesterase Bcer98_0945.